Here is a 901-residue protein sequence, read N- to C-terminus: Pyruvate, phosphate dikinase (901 aa).

The segment at 1–321 (MNIAKSIHFL…WLIEQKPVEA (321 aa)) is N-terminal. Positions 322–380 (KSTISLVRLLLDLYEREVVDAEYVVKSVKPGQLNEILHPVIDMTSVTGLKSSQGGIIGV) are linker 1. Positions 381–482 (PGAAVGRVYF…TINEGDFVTL (102 aa)) are central. At Ser-440 the chain carries Phosphoserine; by PDRP1. The active-site Tele-phosphohistidine intermediate is the His-442. Positions 483–522 (NVPYYGESTLYMGAAQLIEPDPETSGLVSFIELAKGFVRS) are linker 2. The tract at residues 523 to 901 (FHVRANADSP…SAKSGGRRAR (379 aa)) is C-terminal. Residues Arg-550, Arg-606, Glu-750, Gly-771, Thr-772, Asn-773, and Asp-774 each contribute to the substrate site. Position 750 (Glu-750) interacts with Mg(2+). Asp-774 provides a ligand contact to Mg(2+). The Proton donor role is filled by Cys-835. The disordered stretch occupies residues 879–901 (EKEGRKPAWRGRSSAKSGGRRAR).

Belongs to the PEP-utilizing enzyme family. In terms of assembly, homodimer. Requires Mg(2+) as cofactor. In terms of processing, phosphorylation of Ser-440 in the dark inactivates the enzyme. Dephosphorylation upon light stimulation reactivates the enzyme.

It catalyses the reaction pyruvate + phosphate + ATP = phosphoenolpyruvate + AMP + diphosphate + H(+). Activated by light-induced dephosphorylation. Inhibited by dark-induced phosphorylation. Both reactions are catalyzed by PDRP1. Functionally, catalyzes the reversible phosphorylation of pyruvate and phosphate. This chain is Pyruvate, phosphate dikinase (ppdK), found in Treponema pallidum (strain Nichols).